The following is a 215-amino-acid chain: uncharacterized protein (215 aa).

Positions 1–17 (MKKVLASATILSLMLVG) are cleaved as a signal peptide. The segment at 17–110 (GCSNGGNDES…NKQQQSVQDN (94 aa)) is disordered. Cysteine 18 is lipidated: N-palmitoyl cysteine. The S-diacylglycerol cysteine moiety is linked to residue cysteine 18. The span at 25–69 (ESSHKDDSSKTEQKDKSSSQHDSKKDSKRNDTNNKQDNQENKSNK) shows a compositional bias: basic and acidic residues. Positions 70–95 (EQTSNQNSNAGEQRTSERPTTNSNGI) are enriched in polar residues. Residues 96-110 (SSDNQNKQQQSVQDN) show a composition bias toward low complexity.

The protein localises to the cell membrane. This is an uncharacterized protein from Staphylococcus epidermidis (strain ATCC 12228 / FDA PCI 1200).